Reading from the N-terminus, the 399-residue chain is Protein TWIN LOV 1 (399 aa).

The PAS 1 domain occupies 26–97; sequence LWIKEALEEL…MEIREAIREE (72 aa). The PAC 1 domain maps to 98–153; that stretch reads RSVQVSLLNYRKSGSPFWMLFHMCPVFGKDDGKVTNFVAVQVPISGREHHRKKLRN. The PAS 2 domain occupies 249–320; it reads SLVISLGRIK…EMKECILKGQ (72 aa). Cys-296 carries the post-translational modification S-4a-FMN cysteine. In terms of domain architecture, PAC 2 spans 320 to 376; that stretch reads QSCTVQILNYSNRKDKSSFWNLLHISPVRNASGKTAYFVGVQVEASCRNTEIKELRP.

As to quaternary structure, interacts with VTC2, VTC5 and BLH10. In terms of processing, FMN binds covalently to cysteine after exposure to blue light and is reversed in the dark.

This Arabidopsis thaliana (Mouse-ear cress) protein is Protein TWIN LOV 1 (TLP1).